A 235-amino-acid chain; its full sequence is Purine nucleoside phosphorylase DeoD-type (235 aa).

H4 is an a purine D-ribonucleoside binding site. Phosphate is bound by residues G20, R24, R43, and 87 to 90 (RVGT). Residues 178 to 180 (EME) and 202 to 203 (SD) contribute to the a purine D-ribonucleoside site. The active-site Proton donor is D203.

It belongs to the PNP/UDP phosphorylase family. As to quaternary structure, homohexamer; trimer of homodimers.

The enzyme catalyses a purine D-ribonucleoside + phosphate = a purine nucleobase + alpha-D-ribose 1-phosphate. It carries out the reaction a purine 2'-deoxy-D-ribonucleoside + phosphate = a purine nucleobase + 2-deoxy-alpha-D-ribose 1-phosphate. Catalyzes the reversible phosphorolytic breakdown of the N-glycosidic bond in the beta-(deoxy)ribonucleoside molecules, with the formation of the corresponding free purine bases and pentose-1-phosphate. This is Purine nucleoside phosphorylase DeoD-type from Geobacillus sp. (strain WCH70).